A 243-amino-acid chain; its full sequence is Triosephosphate isomerase (243 aa).

A substrate-binding site is contributed by 9–11 (NWK). Catalysis depends on His98, which acts as the Electrophile. Glu167 acts as the Proton acceptor in catalysis. Residues Gly173, Ser205, and 226–227 (GG) each bind substrate.

Belongs to the triosephosphate isomerase family. As to quaternary structure, homodimer.

The protein localises to the cytoplasm. It carries out the reaction D-glyceraldehyde 3-phosphate = dihydroxyacetone phosphate. It functions in the pathway carbohydrate biosynthesis; gluconeogenesis. Its pathway is carbohydrate degradation; glycolysis; D-glyceraldehyde 3-phosphate from glycerone phosphate: step 1/1. Involved in the gluconeogenesis. Catalyzes stereospecifically the conversion of dihydroxyacetone phosphate (DHAP) to D-glyceraldehyde-3-phosphate (G3P). In Mesomycoplasma hyorhinis (Mycoplasma hyorhinis), this protein is Triosephosphate isomerase.